The chain runs to 263 residues: Probable ABC transporter permease protein slr1045 (263 aa).

Transmembrane regions (helical) follow at residues 12–32, 52–72, 97–117, 140–162, 167–186, 192–212, and 234–254; these read LWFQ…LHIL, SMAI…IQVA, APVL…AAEI, LVVP…SLFV, GLVI…LNSV, LWDV…IAII, and AVVT…WLMF.

The protein belongs to the MlaE permease family.

Its subcellular location is the cell membrane. Functionally, could be part of an ABC transporter complex. This Synechocystis sp. (strain ATCC 27184 / PCC 6803 / Kazusa) protein is Probable ABC transporter permease protein slr1045.